We begin with the raw amino-acid sequence, 217 residues long: Tectonin-1 (217 aa).

Tandem repeats lie at residues 2–37 (VHWEKHEGELSVVGVGAGSNDIWGVNHLGHIYHWDG), 38–74 (HKWHKVDGELTNISVGHDGEVWGVNKNHNIYRLDRSN), 75–111 (NKWTQIPGELVQVSVGSHHHVWGVNHLDHIYKWDHHH), 112–146 (NKWDKIDGALTNVSVGKDGTVYGVNRGHQIYRWDG), 147–182 (SKVDLVLGELVQIHVSDAEKIVGVNHLDHIYRLKHG), and 183–217 (KDWEKLDGELTWVSVGHHGEVWGVNKLHHIYKATL). Residues 2 to 217 (VHWEKHEGEL…KLHHIYKATL (216 aa)) form a 6 X approximate tandem repeats region.

This sequence belongs to the tectonin family.

It is found in the cell surface. The protein resides in the cytoplasmic vesicle membrane. In terms of biological role, probably involved in bacterial recognition. May be a lectin that function as part of a transmembrane signaling complex during phagocytosis. This Physarum polycephalum (Slime mold) protein is Tectonin-1 (TECA).